Consider the following 672-residue polypeptide: APC membrane recruitment protein 2 (672 aa).

The segment covering 1 to 21 (METGRSRGGGAAVSERGGGAR) has biased composition (gly residues). Disordered stretches follow at residues 1-23 (METG…ARAG), 74-360 (TMPS…DPSA), and 443-560 (MLSQ…DALC). Residues 142-158 (GSLASSSVAKSHSFFSL) are compositionally biased toward low complexity. Ser154 carries the post-translational modification Phosphoserine. Composition is skewed to basic and acidic residues over residues 163 to 175 (GRSE…HAEA) and 201 to 210 (RGKEEEEKAV). Ser223, Ser227, and Ser244 each carry phosphoserine. The segment covering 230–254 (CVKEEPPRAARRPDSPGQDASRHAA) has biased composition (basic and acidic residues). The span at 255–269 (GEPAGGEQAPASAES) shows a compositional bias: low complexity. Ser284 carries the phosphoserine modification. A compositionally biased stretch (basic and acidic residues) spans 289–303 (SRGEDAEGHRREEKP). The segment covering 343–354 (ASAVPDPSSVDP) has biased composition (low complexity). Ser356 and Ser359 each carry phosphoserine. Over residues 446–457 (QTEDQGQGTQEG) the composition is skewed to low complexity. 2 stretches are compositionally biased toward basic and acidic residues: residues 478–488 (RCGEAAKDMSS) and 502–516 (QQKE…EHQE).

The protein belongs to the Amer family. Interacts with APC.

The protein localises to the cell membrane. In terms of biological role, negative regulator of the canonical Wnt signaling pathway involved in neuroectodermal patterning. Acts by specifically binding phosphatidylinositol 4,5-bisphosphate (PtdIns(4,5)P2), translocating to the cell membrane and interacting with key regulators of the canonical Wnt signaling pathway, such as components of the beta-catenin destruction complex. The chain is APC membrane recruitment protein 2 (Amer2) from Mus musculus (Mouse).